A 645-amino-acid chain; its full sequence is 1,4-alpha-glucan branching enzyme GlgB (645 aa).

Aspartate 309 (nucleophile) is an active-site residue. Glutamate 352 functions as the Proton donor in the catalytic mechanism. A disordered region spans residues 619–645 (VKTRKGSKKQDGSKTKVRSNVTSRGKR). Residues 636-645 (RSNVTSRGKR) show a composition bias toward polar residues.

The protein belongs to the glycosyl hydrolase 13 family. GlgB subfamily. Monomer.

The catalysed reaction is Transfers a segment of a (1-&gt;4)-alpha-D-glucan chain to a primary hydroxy group in a similar glucan chain.. It participates in glycan biosynthesis; glycogen biosynthesis. In terms of biological role, catalyzes the formation of the alpha-1,6-glucosidic linkages in glycogen by scission of a 1,4-alpha-linked oligosaccharide from growing alpha-1,4-glucan chains and the subsequent attachment of the oligosaccharide to the alpha-1,6 position. This is 1,4-alpha-glucan branching enzyme GlgB from Bacillus cereus (strain AH187).